The sequence spans 429 residues: 3-isopropylmalate dehydratase large subunit (429 aa).

Positions 303, 363, and 366 each coordinate [4Fe-4S] cluster.

Belongs to the aconitase/IPM isomerase family. LeuC type 2 subfamily. Heterodimer of LeuC and LeuD. Requires [4Fe-4S] cluster as cofactor.

The enzyme catalyses (2R,3S)-3-isopropylmalate = (2S)-2-isopropylmalate. It participates in amino-acid biosynthesis; L-leucine biosynthesis; L-leucine from 3-methyl-2-oxobutanoate: step 2/4. Functionally, catalyzes the isomerization between 2-isopropylmalate and 3-isopropylmalate, via the formation of 2-isopropylmaleate. The polypeptide is 3-isopropylmalate dehydratase large subunit (Caldicellulosiruptor saccharolyticus (strain ATCC 43494 / DSM 8903 / Tp8T 6331)).